The sequence spans 414 residues: RNA exonuclease 4 (414 aa).

Residues Met-1–Val-174 are disordered. Residues Gln-26 to Ile-42 are compositionally biased toward basic residues. Basic and acidic residues-rich tracts occupy residues Lys-90–Pro-108 and Lys-150–Lys-161. The Exonuclease domain maps to Thr-228–Tyr-379.

This sequence belongs to the REXO4 family.

The protein localises to the nucleus. The chain is RNA exonuclease 4 (rexo4) from Xenopus tropicalis (Western clawed frog).